A 294-amino-acid polypeptide reads, in one-letter code: 4-hydroxy-tetrahydrodipicolinate synthase (294 aa).

Pyruvate is bound at residue threonine 45. Tyrosine 133 (proton donor/acceptor) is an active-site residue. The Schiff-base intermediate with substrate role is filled by lysine 161. Isoleucine 203 serves as a coordination point for pyruvate.

The protein belongs to the DapA family. Homotetramer; dimer of dimers.

It is found in the cytoplasm. It carries out the reaction L-aspartate 4-semialdehyde + pyruvate = (2S,4S)-4-hydroxy-2,3,4,5-tetrahydrodipicolinate + H2O + H(+). The protein operates within amino-acid biosynthesis; L-lysine biosynthesis via DAP pathway; (S)-tetrahydrodipicolinate from L-aspartate: step 3/4. Catalyzes the condensation of (S)-aspartate-beta-semialdehyde [(S)-ASA] and pyruvate to 4-hydroxy-tetrahydrodipicolinate (HTPA). The polypeptide is 4-hydroxy-tetrahydrodipicolinate synthase (Buchnera aphidicola subsp. Schizaphis graminum (strain Sg)).